A 178-amino-acid polypeptide reads, in one-letter code: Bifunctional protein PyrR (178 aa).

The short motif at 99 to 111 is the PRPP-binding element; the sequence is VILVDDVLFTGRT.

This sequence belongs to the purine/pyrimidine phosphoribosyltransferase family. PyrR subfamily. As to quaternary structure, homodimer and homohexamer; in equilibrium.

It carries out the reaction UMP + diphosphate = 5-phospho-alpha-D-ribose 1-diphosphate + uracil. Functionally, regulates transcriptional attenuation of the pyrimidine nucleotide (pyr) operon by binding in a uridine-dependent manner to specific sites on pyr mRNA. This disrupts an antiterminator hairpin in the RNA and favors formation of a downstream transcription terminator, leading to a reduced expression of downstream genes. Its function is as follows. Also displays a weak uracil phosphoribosyltransferase activity which is not physiologically significant. This is Bifunctional protein PyrR from Ligilactobacillus salivarius (strain UCC118) (Lactobacillus salivarius).